A 205-amino-acid polypeptide reads, in one-letter code: Nucleoside triphosphate pyrophosphatase (205 aa).

The active-site Proton acceptor is the D76.

The protein belongs to the Maf family. Requires a divalent metal cation as cofactor.

The protein resides in the cytoplasm. The enzyme catalyses a ribonucleoside 5'-triphosphate + H2O = a ribonucleoside 5'-phosphate + diphosphate + H(+). The catalysed reaction is a 2'-deoxyribonucleoside 5'-triphosphate + H2O = a 2'-deoxyribonucleoside 5'-phosphate + diphosphate + H(+). Functionally, nucleoside triphosphate pyrophosphatase. May have a dual role in cell division arrest and in preventing the incorporation of modified nucleotides into cellular nucleic acids. This is Nucleoside triphosphate pyrophosphatase from Orientia tsutsugamushi (strain Boryong) (Rickettsia tsutsugamushi).